Consider the following 306-residue polypeptide: Acetyl-coenzyme A carboxylase carboxyl transferase subunit beta (306 aa).

In terms of domain architecture, CoA carboxyltransferase N-terminal spans 27–296 (LWHKCPSCDA…PRFVAPVIEP (270 aa)). Residues cysteine 31, cysteine 34, cysteine 50, and cysteine 53 each coordinate Zn(2+). The C4-type zinc finger occupies 31–53 (CPSCDAVLYRPELEKTLDVCPKC).

It belongs to the AccD/PCCB family. In terms of assembly, acetyl-CoA carboxylase is a heterohexamer composed of biotin carboxyl carrier protein (AccB), biotin carboxylase (AccC) and two subunits each of ACCase subunit alpha (AccA) and ACCase subunit beta (AccD). Requires Zn(2+) as cofactor.

It is found in the cytoplasm. It carries out the reaction N(6)-carboxybiotinyl-L-lysyl-[protein] + acetyl-CoA = N(6)-biotinyl-L-lysyl-[protein] + malonyl-CoA. It participates in lipid metabolism; malonyl-CoA biosynthesis; malonyl-CoA from acetyl-CoA: step 1/1. Functionally, component of the acetyl coenzyme A carboxylase (ACC) complex. Biotin carboxylase (BC) catalyzes the carboxylation of biotin on its carrier protein (BCCP) and then the CO(2) group is transferred by the transcarboxylase to acetyl-CoA to form malonyl-CoA. The protein is Acetyl-coenzyme A carboxylase carboxyl transferase subunit beta of Pseudomonas syringae pv. tomato (strain ATCC BAA-871 / DC3000).